A 460-amino-acid polypeptide reads, in one-letter code: Cysteine--tRNA ligase (460 aa).

Cys28 contributes to the Zn(2+) binding site. The short motif at 30 to 40 (MTVYDYCHLGH) is the 'HIGH' region element. Zn(2+) is bound by residues Cys209, His234, and Glu238. A 'KMSKS' region motif is present at residues 266 to 270 (KMSKS). Lys269 contacts ATP.

It belongs to the class-I aminoacyl-tRNA synthetase family. Monomer. Zn(2+) is required as a cofactor.

The protein localises to the cytoplasm. The catalysed reaction is tRNA(Cys) + L-cysteine + ATP = L-cysteinyl-tRNA(Cys) + AMP + diphosphate. This is Cysteine--tRNA ligase from Pseudomonas syringae pv. syringae (strain B728a).